The sequence spans 364 residues: Spermidine/putrescine import ATP-binding protein PotA (364 aa).

In terms of domain architecture, ABC transporter spans 10–244 (IEVVNVSKIF…PAERFVADFI (235 aa)). 46–53 (GPSGCGKT) lines the ATP pocket.

Belongs to the ABC transporter superfamily. Spermidine/putrescine importer (TC 3.A.1.11.1) family. The complex is composed of two ATP-binding proteins (PotA), two transmembrane proteins (PotB and PotC) and a solute-binding protein (PotD).

It is found in the cell inner membrane. The catalysed reaction is ATP + H2O + polyamine-[polyamine-binding protein]Side 1 = ADP + phosphate + polyamineSide 2 + [polyamine-binding protein]Side 1.. In terms of biological role, part of the ABC transporter complex PotABCD involved in spermidine/putrescine import. Responsible for energy coupling to the transport system. This Mesorhizobium japonicum (strain LMG 29417 / CECT 9101 / MAFF 303099) (Mesorhizobium loti (strain MAFF 303099)) protein is Spermidine/putrescine import ATP-binding protein PotA.